Reading from the N-terminus, the 135-residue chain is MESFGEQLRALREERKLTVNQLATYSGVSAAGISRIENGKRGVPKPATIKKLAEALKIPYEGLMYKAGYIEEVHEARAPYETKCKLLEKAEAYDLKNLALLENEKWQYLNKEDLLMLDHYFSFISDEAKKRSADD.

Positions 8–63 (LRALREERKLTVNQLATYSGVSAAGISRIENGKRGVPKPATIKKLAEALKIPYEGL) constitute an HTH cro/C1-type domain. Residues 19–38 (VNQLATYSGVSAAGISRIEN) constitute a DNA-binding region (H-T-H motif).

Functionally, represses the expression of yvaM and both rapG and rapH. Binds directly to the promoter regions of yvaM, rapG and rapH. The sequence is that of HTH-type transcriptional repressor RghR (rghR) from Bacillus subtilis (strain 168).